Here is a 561-residue protein sequence, read N- to C-terminus: Arginine--tRNA ligase (561 aa).

Positions 129–139 match the 'HIGH' region motif; the sequence is ANPTGPLHVGH.

The protein belongs to the class-I aminoacyl-tRNA synthetase family. Monomer.

The protein localises to the cytoplasm. The catalysed reaction is tRNA(Arg) + L-arginine + ATP = L-arginyl-tRNA(Arg) + AMP + diphosphate. The polypeptide is Arginine--tRNA ligase (Bordetella bronchiseptica (strain ATCC BAA-588 / NCTC 13252 / RB50) (Alcaligenes bronchisepticus)).